The primary structure comprises 664 residues: MGGKEMRNCKELKHEKNGNVTEKVGKNKGKSKKVSKDESLLSFDLFLEGKEHSAYKFMGAHFITENRKRGVRFTTWAPRASKIYVIGDFNNWELKEEYSMKKINERGIWSLFLPKLEEGIKYKFAVVNECGNNTVYKADPYAFKSELRPNTASVLTKIKSFRWGDKRWLNKREKEGLDNKPMNIYELHLGSWKRKDGEFMTYEEISEVLVEYIKEMGYTHVEFMPINEHPLDASWGYQGVGYYSVTSRYGDLNGLKTLINKLHKNNIGVLLDWVPSHFCKDEHGLFMFDGSPTYEYEAWWKANNEGWGTCNFDLGRPEVKSFLFSNAMYWINEFHVDGLRVDAVSNMLYLDYGREYGEWEPNIYGGNGNLEAIAFLKELNTIIKKEGKGAITVAEESTSWEGITKPVEEDGLGFDYKWNMGWMNDTLSYIELDPIYRKYHHNKMNFSMMYNYSEKFILPISHDEVVHGKKSLINKMWGDDWKKYAGLRVYASFMMGHPGKKLMFMGCEFGQFVEWREWEELQWNVIEEFDIHRKTKEYFKALNKFYLENSSLWSLDYEEEGFKWIDADNSEESVLSFIRIGKNKKEKLIFICNFTPEVYYDFKVGVPELGEYVEAFNSDALEFGGAGNIVGDSILKATEESFKDFDYSISVKVPPLGTLVLKVK.

Residues 1–17 are compositionally biased toward basic and acidic residues; the sequence is MGGKEMRNCKELKHEKN. Residues 1-31 are disordered; sequence MGGKEMRNCKELKHEKNGNVTEKVGKNKGKS. Aspartate 342 acts as the Nucleophile in catalysis. Glutamate 395 acts as the Proton donor in catalysis.

It belongs to the glycosyl hydrolase 13 family. GlgB subfamily. As to quaternary structure, monomer.

It catalyses the reaction Transfers a segment of a (1-&gt;4)-alpha-D-glucan chain to a primary hydroxy group in a similar glucan chain.. It functions in the pathway glycan biosynthesis; glycogen biosynthesis. Its function is as follows. Catalyzes the formation of the alpha-1,6-glucosidic linkages in glycogen by scission of a 1,4-alpha-linked oligosaccharide from growing alpha-1,4-glucan chains and the subsequent attachment of the oligosaccharide to the alpha-1,6 position. This chain is 1,4-alpha-glucan branching enzyme GlgB 2 (glgB2), found in Clostridium perfringens (strain 13 / Type A).